A 343-amino-acid chain; its full sequence is D-alanine--D-alanine ligase (343 aa).

Positions 129–335 constitute an ATP-grasp domain; the sequence is KYVLENFGVK…YGELISEIIE (207 aa). 162–217 is an ATP binding site; that stretch reads ENKLGYDVFIKPSNSGSSVGISKAHNREELEAGLEEALKFDRKVLVEVALNAREIE. 3 residues coordinate Mg(2+): aspartate 288, glutamate 302, and asparagine 304.

It belongs to the D-alanine--D-alanine ligase family. The cofactor is Mg(2+). It depends on Mn(2+) as a cofactor.

The protein resides in the cytoplasm. The catalysed reaction is 2 D-alanine + ATP = D-alanyl-D-alanine + ADP + phosphate + H(+). Its pathway is cell wall biogenesis; peptidoglycan biosynthesis. Functionally, cell wall formation. The chain is D-alanine--D-alanine ligase from Clostridium novyi (strain NT).